Here is a 733-residue protein sequence, read N- to C-terminus: Oligopeptide transporter 8 (733 aa).

Transmembrane regions (helical) follow at residues 42–62 (MWVL…FFWY), 66–86 (PLTI…HLMA), 115–135 (VLIT…HILS), 147–167 (FLPA…WAGL), 209–229 (FFVI…YLFT), 244–264 (SILV…SFGL), 281–301 (FFAS…ITPL), 357–377 (FAVT…HVLI), 413–433 (LWWF…ICIY), 442–462 (WWGA…VGVI), 531–551 (VGTL…MAEI), 596–616 (YSNI…VYLA), 644–664 (ASAV…HFVF), and 677–697 (VLSG…FLAL).

This sequence belongs to the oligopeptide OPT transporter (TC 2.A.67.1) family.

It is found in the membrane. Functionally, may be involved in the translocation of tetra- and pentapeptides across the cellular membrane in an energy-dependent manner. The polypeptide is Oligopeptide transporter 8 (OPT8) (Arabidopsis thaliana (Mouse-ear cress)).